We begin with the raw amino-acid sequence, 55 residues long: Large ribosomal subunit protein bL33 (55 aa).

This sequence belongs to the bacterial ribosomal protein bL33 family.

The polypeptide is Large ribosomal subunit protein bL33 (Paenarthrobacter aurescens (strain TC1)).